A 259-amino-acid polypeptide reads, in one-letter code: NAD kinase (259 aa).

Aspartate 49 serves as the catalytic Proton acceptor. NAD(+)-binding positions include 49-50 (DG), arginine 54, 118-119 (NE), aspartate 148, alanine 156, 159-164 (TAYNYS), and alanine 183.

Belongs to the NAD kinase family. A divalent metal cation is required as a cofactor.

The protein localises to the cytoplasm. It catalyses the reaction NAD(+) + ATP = ADP + NADP(+) + H(+). Involved in the regulation of the intracellular balance of NAD and NADP, and is a key enzyme in the biosynthesis of NADP. Catalyzes specifically the phosphorylation on 2'-hydroxyl of the adenosine moiety of NAD to yield NADP. The chain is NAD kinase from Xylella fastidiosa (strain 9a5c).